The primary structure comprises 287 residues: 4-diphosphocytidyl-2-C-methyl-D-erythritol kinase (287 aa).

Residue Lys12 is part of the active site. 97–107 (PMGGGLGGGSS) contacts ATP. Asp139 is a catalytic residue.

It belongs to the GHMP kinase family. IspE subfamily.

The enzyme catalyses 4-CDP-2-C-methyl-D-erythritol + ATP = 4-CDP-2-C-methyl-D-erythritol 2-phosphate + ADP + H(+). It functions in the pathway isoprenoid biosynthesis; isopentenyl diphosphate biosynthesis via DXP pathway; isopentenyl diphosphate from 1-deoxy-D-xylulose 5-phosphate: step 3/6. Its function is as follows. Catalyzes the phosphorylation of the position 2 hydroxy group of 4-diphosphocytidyl-2C-methyl-D-erythritol. The polypeptide is 4-diphosphocytidyl-2-C-methyl-D-erythritol kinase (Marinobacter nauticus (strain ATCC 700491 / DSM 11845 / VT8) (Marinobacter aquaeolei)).